The sequence spans 224 residues: 7-cyano-7-deazaguanine synthase (224 aa).

ATP is bound at residue Leu-8–Ile-18. Residues Cys-186, Cys-196, Cys-199, and Cys-202 each contribute to the Zn(2+) site.

This sequence belongs to the QueC family. It depends on Zn(2+) as a cofactor.

It catalyses the reaction 7-carboxy-7-deazaguanine + NH4(+) + ATP = 7-cyano-7-deazaguanine + ADP + phosphate + H2O + H(+). It functions in the pathway purine metabolism; 7-cyano-7-deazaguanine biosynthesis. Catalyzes the ATP-dependent conversion of 7-carboxy-7-deazaguanine (CDG) to 7-cyano-7-deazaguanine (preQ(0)). This Xanthomonas euvesicatoria pv. vesicatoria (strain 85-10) (Xanthomonas campestris pv. vesicatoria) protein is 7-cyano-7-deazaguanine synthase.